Reading from the N-terminus, the 284-residue chain is Bifunctional protein FolD (284 aa).

NADP(+) is bound by residues 166 to 168 (GAS), S191, and I232.

This sequence belongs to the tetrahydrofolate dehydrogenase/cyclohydrolase family. Homodimer.

The enzyme catalyses (6R)-5,10-methylene-5,6,7,8-tetrahydrofolate + NADP(+) = (6R)-5,10-methenyltetrahydrofolate + NADPH. It carries out the reaction (6R)-5,10-methenyltetrahydrofolate + H2O = (6R)-10-formyltetrahydrofolate + H(+). The protein operates within one-carbon metabolism; tetrahydrofolate interconversion. Its function is as follows. Catalyzes the oxidation of 5,10-methylenetetrahydrofolate to 5,10-methenyltetrahydrofolate and then the hydrolysis of 5,10-methenyltetrahydrofolate to 10-formyltetrahydrofolate. This Neisseria gonorrhoeae (strain ATCC 700825 / FA 1090) protein is Bifunctional protein FolD.